A 238-amino-acid polypeptide reads, in one-letter code: MKVDVVISADYISDDIVKDKVVVVIDMFRATSVITTAINNGCQKIIPYLTVEETLEEAKKYDNNEVILGGERRAVKIEGFDLSNSPLEYTEEVVKNKTVLMTTTNGTRALTKCLLGKKIIIAAMINAEAVAKKLLEFNDDIVIVNAGTNGEFSMDDYICGGYIINTMLKEKSNIELTDIAKTSNMIYESNKDIINYVKEARHYSVMRSLKLDNDIEYCIKKSIIDVVPIYDGDKIIKL.

It belongs to the ComB family. The cofactor is Mg(2+).

The catalysed reaction is (2R)-O-phospho-3-sulfolactate + H2O = (2R)-3-sulfolactate + phosphate. This Clostridium botulinum (strain Eklund 17B / Type B) protein is Probable 2-phosphosulfolactate phosphatase.